We begin with the raw amino-acid sequence, 940 residues long: Valine--tRNA ligase (940 aa).

Residues 47–57 carry the 'HIGH' region motif; the sequence is PNVTGILHMGH. Residues 564-568 carry the 'KMSKS' region motif; it reads KLSKS. Residue Lys567 participates in ATP binding. Residues 872–938 are a coiled coil; the sequence is PMEHITKERN…LQSILDKLAS (67 aa).

The protein belongs to the class-I aminoacyl-tRNA synthetase family. ValS type 1 subfamily. In terms of assembly, monomer.

The protein localises to the cytoplasm. The catalysed reaction is tRNA(Val) + L-valine + ATP = L-valyl-tRNA(Val) + AMP + diphosphate. In terms of biological role, catalyzes the attachment of valine to tRNA(Val). As ValRS can inadvertently accommodate and process structurally similar amino acids such as threonine, to avoid such errors, it has a 'posttransfer' editing activity that hydrolyzes mischarged Thr-tRNA(Val) in a tRNA-dependent manner. In Chlamydia caviae (strain ATCC VR-813 / DSM 19441 / 03DC25 / GPIC) (Chlamydophila caviae), this protein is Valine--tRNA ligase.